Reading from the N-terminus, the 119-residue chain is Hisactophilin-3 (119 aa).

A lipid anchor (N-myristoyl glycine) is attached at Gly2. The interval 8-110 (SHHGHFLSAE…SIYTTHHHHH (103 aa)) is contains several HHXH repeats. 2 repeat units span residues 34–47 (FHVENHGHHKVAIR) and 75–87 (FHLEHHGGKVSIK). The interval 34 to 87 (FHVENHGHHKVAIRTHANKYVSINDNNDVYISHHFHGEHSLFHLEHHGGKVSIK) is 2 X 13 AA approximate repeats.

It belongs to the hisactophilin family. Phosphorylated.

It localises to the cytoplasm. Its subcellular location is the cell membrane. Functionally, may act as an intracellular pH sensor that links chemotactic signals to responses in the microfilament system of the cells by nucleating actin polymerization or stabilizing the filaments. The chain is Hisactophilin-3 (hatC) from Dictyostelium discoideum (Social amoeba).